Reading from the N-terminus, the 380-residue chain is Cytochrome b (380 aa).

Helical transmembrane passes span 34 to 54 (FGSL…LLAM), 78 to 99 (WLIR…YLHI), 114 to 134 (WNTG…GYVL), and 179 to 199 (FFAL…IHLT). The heme b site is built by histidine 84 and histidine 98. Heme b-binding residues include histidine 183 and histidine 197. An a ubiquinone-binding site is contributed by histidine 202. Transmembrane regions (helical) follow at residues 227-247 (LKDI…ALFS), 289-309 (LGGV…PFLH), 321-341 (ISQL…WVGS), and 348-368 (FIII…VLFP).

It belongs to the cytochrome b family. The cytochrome bc1 complex contains 11 subunits: 3 respiratory subunits (MT-CYB, CYC1 and UQCRFS1), 2 core proteins (UQCRC1 and UQCRC2) and 6 low-molecular weight proteins (UQCRH/QCR6, UQCRB/QCR7, UQCRQ/QCR8, UQCR10/QCR9, UQCR11/QCR10 and a cleavage product of UQCRFS1). This cytochrome bc1 complex then forms a dimer. Heme b is required as a cofactor.

It is found in the mitochondrion inner membrane. Component of the ubiquinol-cytochrome c reductase complex (complex III or cytochrome b-c1 complex) that is part of the mitochondrial respiratory chain. The b-c1 complex mediates electron transfer from ubiquinol to cytochrome c. Contributes to the generation of a proton gradient across the mitochondrial membrane that is then used for ATP synthesis. This is Cytochrome b (MT-CYB) from Pelecanoides georgicus (South Georgia diving petrel).